Here is a 220-residue protein sequence, read N- to C-terminus: Thiamine-phosphate synthase (220 aa).

Residues 39-43 and Asn-80 contribute to the 4-amino-2-methyl-5-(diphosphooxymethyl)pyrimidine site; that span reads QLRDK. The Mg(2+) site is built by Asp-81 and Asp-100. Ser-119 is a 4-amino-2-methyl-5-(diphosphooxymethyl)pyrimidine binding site. Residue 145-147 participates in 2-[(2R,5Z)-2-carboxy-4-methylthiazol-5(2H)-ylidene]ethyl phosphate binding; sequence TPT. 4-amino-2-methyl-5-(diphosphooxymethyl)pyrimidine is bound at residue Lys-148. Gly-176 contributes to the 2-[(2R,5Z)-2-carboxy-4-methylthiazol-5(2H)-ylidene]ethyl phosphate binding site.

The protein belongs to the thiamine-phosphate synthase family. Requires Mg(2+) as cofactor.

The catalysed reaction is 2-[(2R,5Z)-2-carboxy-4-methylthiazol-5(2H)-ylidene]ethyl phosphate + 4-amino-2-methyl-5-(diphosphooxymethyl)pyrimidine + 2 H(+) = thiamine phosphate + CO2 + diphosphate. The enzyme catalyses 2-(2-carboxy-4-methylthiazol-5-yl)ethyl phosphate + 4-amino-2-methyl-5-(diphosphooxymethyl)pyrimidine + 2 H(+) = thiamine phosphate + CO2 + diphosphate. It catalyses the reaction 4-methyl-5-(2-phosphooxyethyl)-thiazole + 4-amino-2-methyl-5-(diphosphooxymethyl)pyrimidine + H(+) = thiamine phosphate + diphosphate. Its pathway is cofactor biosynthesis; thiamine diphosphate biosynthesis; thiamine phosphate from 4-amino-2-methyl-5-diphosphomethylpyrimidine and 4-methyl-5-(2-phosphoethyl)-thiazole: step 1/1. Functionally, condenses 4-methyl-5-(beta-hydroxyethyl)thiazole monophosphate (THZ-P) and 2-methyl-4-amino-5-hydroxymethyl pyrimidine pyrophosphate (HMP-PP) to form thiamine monophosphate (TMP). The polypeptide is Thiamine-phosphate synthase (Mycobacterium marinum (strain ATCC BAA-535 / M)).